The following is a 986-amino-acid chain: MIKDCILRYQRVLGKRVHDQPGYDTHGLPIEVATEKLLGISNKQEIIDKIGVETFINKCKEFALSNADKMTQNFKNVGVFMDWERPYYTLDPSYISSSWSVIKKAYEKGMLDKGTAVLHWCPRCETTLSDYEVSEYRDLEDPSIYVKFKIKGEKNRYLLIWTTTPWTIPSNVFVMINKDYDYADVEVNGEILVIAKDRVEAVMKEASITNYKILRTYKGSELIGIKYEHPLREFVSAQTKLDDFHQVVDAGNIVTLTDGTGLVHSATGHGEEDFTVGQKYGFPVVMFVNDRGEFTEEGGKYKGLKVRDASKAIISDLKSKNTLFFEGKIVHRYPVCWRCKTPLILRAIDQWFIRVTKIKDKMLNEIEKVNWIPDWGKSRISNMVKELRDWVISRQRFWGTPLPIWICERCNNVMVVGSKEELESIAIDPVPNDLHRPWIDNVRVKCNKCGGVAKRIPDVADVWFDSGVAFFASLGKDWQEKWKELGPVDLVLEGHDQLRGWFFSLLRSGLILLDRAPYTSVLVHGFMLDEQGREMHKSLGNYVEPSVVVEKYGRDILRLWLLRNTTWEDAKFSWKALELTKRDLQIIWNTFVFASMYMNLDNFEPDKYTLDDIIKYAKIEDLWILSRFNSMLKKVNESMKDYKVHEMTNYLINFLIEDVSRFYIRLIRKRAWIEANTQDKIAMYYILYYILKQWIILASTIIPFISEKIYKSFVVNAKESVSMESSINYDERFIDNELERAFEVAREINEASLNARAKAGIKLRWPLAKVYIFIENEDTLAKVGRIKDVLISMLNAKDIEISKIEGFKSFSKYKVEPNRSIIGKEYKSMSPKIVEYIENNRDIIAMDILNKKQHVAKIDNFDIILNASYVIISEETVEGFISSKFSKGIVVISKEISESEEEEGLIRDIIRRIQFMRKQLKLNVLDYIEISMKVPEERVKTIQKWEEFIKSETRASNIILGEAKGDITMDWDIEGESYIIGIKKST.

Residues 534-538 (EMHKS) carry the 'KMSKS' region motif. Position 537 (Lys-537) interacts with ATP.

It belongs to the class-I aminoacyl-tRNA synthetase family. IleS type 2 subfamily. In terms of assembly, monomer. The cofactor is Zn(2+).

Its subcellular location is the cytoplasm. The catalysed reaction is tRNA(Ile) + L-isoleucine + ATP = L-isoleucyl-tRNA(Ile) + AMP + diphosphate. Functionally, catalyzes the attachment of isoleucine to tRNA(Ile). As IleRS can inadvertently accommodate and process structurally similar amino acids such as valine, to avoid such errors it has two additional distinct tRNA(Ile)-dependent editing activities. One activity is designated as 'pretransfer' editing and involves the hydrolysis of activated Val-AMP. The other activity is designated 'posttransfer' editing and involves deacylation of mischarged Val-tRNA(Ile). The polypeptide is Isoleucine--tRNA ligase (ileS) (Saccharolobus solfataricus (strain ATCC 35092 / DSM 1617 / JCM 11322 / P2) (Sulfolobus solfataricus)).